A 651-amino-acid polypeptide reads, in one-letter code: MPSRSISAPVPVLAPAPIVSSLVPAAPSGHQNKTTRIFPPFVVAGAGAGFSLFITLSVCFCKFSRKRSSPPAENASSSPRRPSPREFSYSSLRRATGSFSQANRLGQGGFGVVFRGTISGGENVAVKVMDSGSLQGEGEFQNELFFAAKLDSPHVVPVIGFSHDRKRRRLLLVYKLMDNGNLQDALLHRRCPELMDWNRRFLVAVNIADGIKHLHSLEPPVIHGDIKPSNVLLDSLFSAKIADFGLARLKAEQVEISVAPERDGDGSMVEEVESVVTTVTGYEDFNFGLVDQSPESVAKVPGSVSASPEATTVVSVSPEMGEKTDEDGGSVVVMKKGKESESKDWWWKQESNVERGRVKEYVMQWIGSEVKKERPSRSDWIEAAALSSSSSKKLEKKTSKRLDWWLSLEEEDENKKKKKRRMVREWWKDEYRRELAKKRKKKKKMTLEAEFCSDDGSSSVSQWRRGSGSGSSIDWWLDGLSGERWLRARGNSHDSVSGEIAKSCGISSTPSMRGTVCYAAPEYCNLDNNVSEKCDVYSYGVLLLVLISGRRPLEMTGSASEIQRANLMSWARKLARRGKLVDLVDQKLQNLDQEQAVLCIKVALLCLQRLPISRPSMKEVLGMLKGEVNLPELPSEFSPSPPLKTTRKQRR.

The first 25 residues, 1-25 (MPSRSISAPVPVLAPAPIVSSLVPA), serve as a signal peptide directing secretion. At 26–40 (APSGHQNKTTRIFPP) the chain is on the extracellular side. A glycan (N-linked (GlcNAc...) asparagine) is linked at N32. A helical transmembrane segment spans residues 41–61 (FVVAGAGAGFSLFITLSVCFC). Over 62 to 651 (KFSRKRSSPP…PLKTTRKQRR (590 aa)) the chain is Cytoplasmic. The tract at residues 66–87 (KRSSPPAENASSSPRRPSPREF) is disordered. Positions 69-87 (SPPAENASSSPRRPSPREF) are enriched in low complexity. One can recognise a Protein kinase domain in the interval 99–633 (FSQANRLGQG…LKGEVNLPEL (535 aa)). ATP is bound by residues 105-113 (LGQGGFGVV) and K127. The active-site Proton acceptor is the D225.

This sequence belongs to the protein kinase superfamily. Ser/Thr protein kinase family.

It is found in the cell membrane. It carries out the reaction L-seryl-[protein] + ATP = O-phospho-L-seryl-[protein] + ADP + H(+). The catalysed reaction is L-threonyl-[protein] + ATP = O-phospho-L-threonyl-[protein] + ADP + H(+). The protein is Receptor-like serine/threonine-protein kinase At4g25390 of Arabidopsis thaliana (Mouse-ear cress).